The primary structure comprises 237 residues: MKYDRPIIALDFPDKEKTFEFLKKFPEDEKLFVKVGMELFYSEGSDMVKELISEGHDVFLDLKLHDIPNTVKQAMKVIGKLGVKLTTVHISGGSEMLIAAKEGLLDGANGDTNTKILGITQLTSTDEEMVKNEQKLSISLKESVKNYAKIAQKSGLDGVVCSAEESDMIYKLTGDDFLRITPGIRLAGGDVGDQKRVMTPDAAARNHSSGIVVGRAITKAENPLDSYRLVTKLWREK.

Residues Asp-11, Lys-34, 61-70 (DLKLHDIPNT), Thr-123, Arg-185, Gln-194, Gly-214, and Arg-215 each bind substrate. Residue Lys-63 is the Proton donor of the active site.

This sequence belongs to the OMP decarboxylase family. Type 1 subfamily. As to quaternary structure, homodimer.

It catalyses the reaction orotidine 5'-phosphate + H(+) = UMP + CO2. The protein operates within pyrimidine metabolism; UMP biosynthesis via de novo pathway; UMP from orotate: step 2/2. Functionally, catalyzes the decarboxylation of orotidine 5'-monophosphate (OMP) to uridine 5'-monophosphate (UMP). This is Orotidine 5'-phosphate decarboxylase from Ligilactobacillus salivarius (strain UCC118) (Lactobacillus salivarius).